The sequence spans 165 residues: Secreted acidic protein 2 (165 aa).

Composition is skewed to acidic residues over residues 1 to 58 (WSXS…DDSG) and 80 to 102 (ESSD…DAYN). Residues 1 to 112 (WSXSGDDDDD…DDSQAGELNS (112 aa)) form a disordered region. Positions 103–112 (DDSQAGELNS) are enriched in polar residues.

As to expression, component of the acid-insoluble and acid-soluble organic matrix of the aragonitic skeleton (at protein level).

Its subcellular location is the secreted. The chain is Secreted acidic protein 2 from Acropora millepora (Staghorn coral).